The chain runs to 293 residues: Elongation factor Ts (293 aa).

The segment at 80–83 is involved in Mg(2+) ion dislocation from EF-Tu; that stretch reads TDFV.

Belongs to the EF-Ts family.

It is found in the cytoplasm. In terms of biological role, associates with the EF-Tu.GDP complex and induces the exchange of GDP to GTP. It remains bound to the aminoacyl-tRNA.EF-Tu.GTP complex up to the GTP hydrolysis stage on the ribosome. This Janthinobacterium sp. (strain Marseille) (Minibacterium massiliensis) protein is Elongation factor Ts.